The chain runs to 455 residues: UDP-N-acetylmuramoylalanine--D-glutamate ligase (455 aa).

Residue 117–123 (GTNGKTT) coordinates ATP.

It belongs to the MurCDEF family.

It localises to the cytoplasm. It carries out the reaction UDP-N-acetyl-alpha-D-muramoyl-L-alanine + D-glutamate + ATP = UDP-N-acetyl-alpha-D-muramoyl-L-alanyl-D-glutamate + ADP + phosphate + H(+). Its pathway is cell wall biogenesis; peptidoglycan biosynthesis. Cell wall formation. Catalyzes the addition of glutamate to the nucleotide precursor UDP-N-acetylmuramoyl-L-alanine (UMA). The chain is UDP-N-acetylmuramoylalanine--D-glutamate ligase from Alkaliphilus metalliredigens (strain QYMF).